The following is a 353-amino-acid chain: Ribosomal RNA small subunit methyltransferase H (353 aa).

Residues 50-52 (GGY), Asp69, Phe96, Asp117, and Gln124 each bind S-adenosyl-L-methionine. A disordered region spans residues 276 to 353 (AAQASRHVPG…PAPQGRGPRR (78 aa)).

The protein belongs to the methyltransferase superfamily. RsmH family.

It localises to the cytoplasm. The catalysed reaction is cytidine(1402) in 16S rRNA + S-adenosyl-L-methionine = N(4)-methylcytidine(1402) in 16S rRNA + S-adenosyl-L-homocysteine + H(+). Its function is as follows. Specifically methylates the N4 position of cytidine in position 1402 (C1402) of 16S rRNA. This is Ribosomal RNA small subunit methyltransferase H from Methylorubrum extorquens (strain CM4 / NCIMB 13688) (Methylobacterium extorquens).